The chain runs to 72 residues: Large ribosomal subunit protein bL28 (72 aa).

Belongs to the bacterial ribosomal protein bL28 family.

The protein is Large ribosomal subunit protein bL28 of Chlorobium limicola (strain DSM 245 / NBRC 103803 / 6330).